The primary structure comprises 629 residues: Filament-like plant protein 2 (629 aa).

Coiled coils occupy residues 34–61 (WEKA…LEDR) and 102–171 (NTGL…LEAE). Positions 186–205 (SSNQSVDSHSDGGRERVEGS) are disordered. Over residues 193–203 (SHSDGGRERVE) the composition is skewed to basic and acidic residues. A coiled-coil region spans residues 270–493 (ELSLMEKLEK…IEEKTMIKRE (224 aa)).

This sequence belongs to the FPP family. As to quaternary structure, interacts with WPP/MAF proteins. Binds to COG2; this interaction promotes the association between cortical microtubules and EXO70A1. Accumulates in preferentially xylem cells.

It is found in the vesicle. Ensures, when in complex with FPP3/VETH1 and COG2, the correct secondary cell wall (SCW) deposition pattern by recruiting exocyst components to cortical microtubules in xylem cells during secondary cell wall deposition by recruiting EXO70A1. The protein is Filament-like plant protein 2 of Arabidopsis thaliana (Mouse-ear cress).